Consider the following 1551-residue polypeptide: MCSRGDANAAGAAAARRVTGLCYNMGLLIALALLCLFSLAEANSKAITTSLTTKWFSAPLLLEASEFLAEDSQEKFWSFVEASQNIGSSDQHDTDRSYYDAILEAAFRFLSPLQQNLLKFCLSLRSYSASIQAFQQIAVDEPPPEGCKSFLSVHGKQTCDLGTLESLLLTAPDRPKPLLFKGDHRYPSSNPESPVVIFYSEIGHEEFSNIHHQLISKSNEGKINYVFRHYISNPRKEPVHLSGYGVELAIKSTEYKAKDDTQVKGTEVNTTVIGENDPIDEVQGFLFGKLRELYPSLEGQLKEFRKHLVESTNEMAPLKVWQLQDLSFQTAARILAAPVELALVVMKDISQNFPTKARAITKTAVSAQLRAEVEENQKYFKGTIGLQPGDSALFINGLHIDLDTQDIFSLFDTLRNEARVMEGLHRLGIEGLSLHNILKLNIQPSETDYAVDIRSPAISWVNNLEVDSRYNSWPSSLQELLRPTFPGVIRQIRKNLHNMVFIVDPVHETTAELVSIAEMFLSNHIPLRIGFIFVVNDSEDVDGMQDAGVAVLRAYNYVGQEVDGYHAFQTLTQIYNKVRTGEKVKVEHVVSVLEKKYPYVEVNSILGIDSAYDQNRKEARGYYEQTGVGPLPVVLFNGMPFEKEQLDPDELETITMHKILETTTFFQRAVYLGELSHDQDVVEYIMNQPNVVPRINSRILTAKREYLDLTASNNFYVDDFARFSALDSRGKTAAIANSMNYLTKKGMSSKEIYDDSFIRPVTFWIVGDFDSPSGRQLLYDAIKHQKTSNNVRISMINNPSREISDSSTPVSRAIWAALQTQTSNSAKNFITKMVKEETAEALAAGVDIGEFSVGGMDVSLFKEVFESSRMDFILSHALYCRDVLKLKKGQRVVISNGRIIGPLEDSELFNQDDFHLLENIILKTSGQKIKSHIQQLRVEEDVASDLVMKVDALLSAQPKGEARIEYQFFEDKHSAIKLKPKEGETYYDVVAVVDPVTREAQRLAPLLLVLAQLINMSLRVFMNCQSKLSDMPLKSFYRYVLEPEISFTADNSFAKGPIAKFLDMPQSPLFTLNLNTPESWMVESVRTPYDLDNIYLEEVDSIVAAEYELEYLLLEGHCYDITTGQPPRGLQFTLGTSANPTTVDTIVMANLGYFQLKANPGAWILRLRKGRSDDIYRIYSHDGTDSPPDANDVVVILNNFKSKIIKVKVQKKADMANEDLLSDGTNENESGFWDSFKWGFSGQKTEEVKQDKDDIINIFSVASGHLYERFLRIMMLSVLKNTKTPVKFWFLKNYLSPTFKEFIPYMAKKYNFQYELVQYKWPRWLHQQTEKQRIIWGYKILFLDVLFPLVVDKFLFVDADQIVRTDLKELRDFNLDGAPYGYTPFCDSRREMDGYRFWKSGYWASHLAGRKYHISALYVVDLKKFRKIAAGDRLRGQYQGLSQDPNSLSNLDQDLPNNMIHQVPIKSLPQEWLWCETWCDDASKKRAKTIDLCNNPMTKEPKLEAAVRIVPEWQDYDQEIKQLQTLFQEEKELGTLHEEETQEGSQKHEEL.

The first 42 residues, 1–42 (MCSRGDANAAGAAAARRVTGLCYNMGLLIALALLCLFSLAEA), serve as a signal peptide directing secretion. Residues Asn-269, Asn-536, Asn-1015, and Asn-1228 are each glycosylated (N-linked (GlcNAc...) asparagine). The segment at 1244–1551 (KTEEVKQDKD…QEGSQKHEEL (308 aa)) is glucosyltransferase. At Ser-1277 the chain carries Phosphoserine. The tract at residues 1531-1551 (KELGTLHEEETQEGSQKHEEL) is disordered. The Prevents secretion from ER motif lies at 1548 to 1551 (HEEL).

This sequence belongs to the glycosyltransferase 8 family. As to quaternary structure, monomer as well as in a tight complex with SELENOF. Interacts with METTL23. Part of a large chaperone multiprotein complex comprising DNAJB11, HSP90B1, HSPA5, HYOU, PDIA2, PDIA4, PDIA6, PPIB, SDF2L1, UGGT1 and very small amounts of ERP29, but not, or at very low levels, CALR nor CANX. Ca(2+) is required as a cofactor.

The protein localises to the endoplasmic reticulum lumen. The protein resides in the endoplasmic reticulum-Golgi intermediate compartment. It catalyses the reaction N(4)-(alpha-D-Man-(1-&gt;2)-alpha-D-Man-(1-&gt;2)-alpha-D-Man-(1-&gt;3)-[alpha-D-Man-(1-&gt;2)-alpha-D-Man-(1-&gt;3)-[alpha-D-Man-(1-&gt;2)-alpha-D-Man-(1-&gt;6)]-alpha-D-Man-(1-&gt;6)]-beta-D-Man-(1-&gt;4)-beta-D-GlcNAc-(1-&gt;4)-beta-D-GlcNAc)-L-asparaginyl-[protein] (N-glucan mannose isomer 9A1,2,3B1,2,3) + UDP-alpha-D-glucose = N(4)-(alpha-D-Glc-(1-&gt;3)-alpha-D-Man-(1-&gt;2)-alpha-D-Man-(1-&gt;2)-alpha-D-Man-(1-&gt;3)-[alpha-D-Man-(1-&gt;2)-alpha-D-Man-(1-&gt;3)-[alpha-D-Man-(1-&gt;2)-alpha-D-Man-(1-&gt;6)]-alpha-D-Man-(1-&gt;6)]-beta-D-Man-(1-&gt;4)-beta-D-GlcNAc-(1-&gt;4)-beta-D-GlcNAc)-L-asparaginyl-[protein] + UDP + H(+). The protein operates within protein modification; protein glycosylation. Its function is as follows. Recognizes glycoproteins with minor folding defects. Reglucosylates single N-glycans near the misfolded part of the protein, thus providing quality control for protein folding in the endoplasmic reticulum. Reglucosylated proteins are recognized by calreticulin for recycling to the endoplasmic reticulum and refolding or degradation. This Rattus norvegicus (Rat) protein is UDP-glucose:glycoprotein glucosyltransferase 1 (Uggt1).